Consider the following 462-residue polypeptide: Neuronal acetylcholine receptor subunit non-alpha-2 (462 aa).

Residues 1–30 form the signal peptide; sequence MTLAVIGLFTLFTSIIAITPAREFVSLAER. The Extracellular portion of the chain corresponds to 31–234; sequence EDALLRELFQ…ITYSFILKRL (204 aa). N-linked (GlcNAc...) asparagine glycans are attached at residues N53 and N168. Residues C155 and C169 are joined by a disulfide bond. The next 3 membrane-spanning stretches (helical) occupy residues 235–259, 267–284, and 301–322; these read PLFYTLFLIIPCLGLSFLTVLVFYL, VSLSTSVLVSLTVFLLVI, and YLLFIMIFVTLSIIVTIFVINV. The Cytoplasmic segment spans residues 323–428; it reads HHRSSATYHP…WKFVAQVLDR (106 aa). The span at 362-372 shows a compositional bias: basic and acidic residues; sequence ELEPHSPDLKP. The tract at residues 362-384 is disordered; the sequence is ELEPHSPDLKPRNKKGPPGPEGE. The chain crosses the membrane as a helical span at residues 429-446; it reads IFLWTFLTVSVLGTILIF.

The protein belongs to the ligand-gated ion channel (TC 1.A.9) family. Acetylcholine receptor (TC 1.A.9.1) subfamily. Neuronal AChR seems to be composed of two different type of subunits: alpha and beta.

The protein localises to the postsynaptic cell membrane. It localises to the cell membrane. Its function is as follows. After binding acetylcholine, the AChR responds by an extensive change in conformation that affects all subunits and leads to opening of an ion-conducting channel across the plasma membrane. The sequence is that of Neuronal acetylcholine receptor subunit non-alpha-2 from Carassius auratus (Goldfish).